The sequence spans 529 residues: uncharacterized protein (529 aa).

ABC transporter domains lie at 6–257 (LAIE…QKLL) and 287–526 (IRKG…RQLL). ATP contacts are provided by residues 42–49 (GESGSGKS) and 319–326 (GESGSGKS).

This sequence belongs to the ABC transporter superfamily.

This is an uncharacterized protein from Escherichia coli (strain K12).